Consider the following 154-residue polypeptide: Ribonuclease H (154 aa).

The RNase H type-1 domain maps to 1 to 142 (MLKQVEIFTD…CDELARRAAG (142 aa)). Positions 10, 48, 70, and 134 each coordinate Mg(2+).

Belongs to the RNase H family. As to quaternary structure, monomer. Mg(2+) serves as cofactor.

Its subcellular location is the cytoplasm. The enzyme catalyses Endonucleolytic cleavage to 5'-phosphomonoester.. Functionally, endonuclease that specifically degrades the RNA of RNA-DNA hybrids. The polypeptide is Ribonuclease H (Edwardsiella ictaluri (strain 93-146)).